A 337-amino-acid chain; its full sequence is MVVPKVGINGFGRIGRIVFRNAIEHEGVDIVAVNDPFIEVHYAAYMLKYDSTHGRFNGTVEFDGNTLIVNGKKIKFYAERDPAQIPWSETGAEYVVESTGVFTKQEKASLHLKGGAKKVIISAPSSDSPMFVMGVNNDQYTKDITVLSNASCTTNCLAPLAKVINDKFGIVEGLMTTVHSYTATQKVVDGPSNKDWRGGRTAAQNIIPSSTGAAKAVGKVIPSLNGKLTGMSMRVPTSNVSVVDLTARLEKAATYDEIKQAVKEASEGPLKGVLGYTEDDVVSSDLNGDPHSSIFDAKAGIALNSNFVKLVSWYDNEWGYSRRVIDLIAYIAQVDAQ.

NAD(+) is bound by residues 13 to 14 (RI), aspartate 35, and arginine 80. D-glyceraldehyde 3-phosphate is bound by residues 151-153 (SCT), threonine 182, 211-212 (TG), and arginine 234. Cysteine 152 functions as the Nucleophile in the catalytic mechanism. Asparagine 316 provides a ligand contact to NAD(+).

Belongs to the glyceraldehyde-3-phosphate dehydrogenase family. In terms of assembly, homotetramer.

It is found in the cytoplasm. It carries out the reaction D-glyceraldehyde 3-phosphate + phosphate + NAD(+) = (2R)-3-phospho-glyceroyl phosphate + NADH + H(+). It participates in carbohydrate degradation; glycolysis; pyruvate from D-glyceraldehyde 3-phosphate: step 1/5. This chain is Glyceraldehyde-3-phosphate dehydrogenase (GPD1), found in Monascus purpureus (Red mold).